A 183-amino-acid polypeptide reads, in one-letter code: Holliday junction branch migration complex subunit RuvA (183 aa).

Residues 1-64 (MVVGIEGIIT…EDSNKFYGFL (64 aa)) form a domain I region. The tract at residues 65–139 (DKDEQKMFEM…DTRTKLENVS (75 aa)) is domain II. Ser-139 is a region of interest (flexible linker). The tract at residues 139–183 (SDDKSEALAALLTLGFKQEKIISVLASAQATGTSELIKEALKKLR) is domain III.

Belongs to the RuvA family. Homotetramer. Forms an RuvA(8)-RuvB(12)-Holliday junction (HJ) complex. HJ DNA is sandwiched between 2 RuvA tetramers; dsDNA enters through RuvA and exits via RuvB. An RuvB hexamer assembles on each DNA strand where it exits the tetramer. Each RuvB hexamer is contacted by two RuvA subunits (via domain III) on 2 adjacent RuvB subunits; this complex drives branch migration. In the full resolvosome a probable DNA-RuvA(4)-RuvB(12)-RuvC(2) complex forms which resolves the HJ.

It is found in the cytoplasm. Its function is as follows. The RuvA-RuvB-RuvC complex processes Holliday junction (HJ) DNA during genetic recombination and DNA repair, while the RuvA-RuvB complex plays an important role in the rescue of blocked DNA replication forks via replication fork reversal (RFR). RuvA specifically binds to HJ cruciform DNA, conferring on it an open structure. The RuvB hexamer acts as an ATP-dependent pump, pulling dsDNA into and through the RuvAB complex. HJ branch migration allows RuvC to scan DNA until it finds its consensus sequence, where it cleaves and resolves the cruciform DNA. In Campylobacter jejuni subsp. doylei (strain ATCC BAA-1458 / RM4099 / 269.97), this protein is Holliday junction branch migration complex subunit RuvA.